Here is a 123-residue protein sequence, read N- to C-terminus: uncharacterized protein (123 aa).

This sequence to insertion element IS1016 transposase.

This is an uncharacterized protein from Haemophilus influenzae (strain ATCC 51907 / DSM 11121 / KW20 / Rd).